A 289-amino-acid polypeptide reads, in one-letter code: Protoheme IX farnesyltransferase 2 (289 aa).

9 helical membrane passes run 1-21 (MIKPGIIMGNLISVTGGFLLA), 28-48 (LTLMLMTILGLSLVVASGCGL), 76-96 (YSVLVFSLALGLIGFGLLAIF), 100-120 (IALLFAVIGYLVYVGIYSLYM), 125-145 (VYGTLIGSFSGAVPPVVGYCA), 155-175 (VILLLMFSLWQMPHSYAIAIF), 199-219 (LHIVLYIAVFSLVSALLPLAG), 221-241 (TGIAFMAVTCATSLWWLGMAL), and 260-280 (CSIVTITALSIAMAMDFQLVV).

Belongs to the UbiA prenyltransferase family. Protoheme IX farnesyltransferase subfamily.

Its subcellular location is the cell inner membrane. The enzyme catalyses heme b + (2E,6E)-farnesyl diphosphate + H2O = Fe(II)-heme o + diphosphate. It functions in the pathway porphyrin-containing compound metabolism; heme O biosynthesis; heme O from protoheme: step 1/1. Converts heme B (protoheme IX) to heme O by substitution of the vinyl group on carbon 2 of heme B porphyrin ring with a hydroxyethyl farnesyl side group. This Shewanella woodyi (strain ATCC 51908 / MS32) protein is Protoheme IX farnesyltransferase 2.